The sequence spans 367 residues: Probable cinnamyl alcohol dehydrogenase (367 aa).

A Zn(2+)-binding site is contributed by cysteine 47. Threonine 49 lines the NADP(+) pocket. Positions 69, 70, 100, 103, 106, 114, and 163 each coordinate Zn(2+). NADP(+) is bound by residues threonine 167, 188 to 193, 211 to 216, threonine 251, glycine 275, and 298 to 300; these read GLGGVG, SSSSKK, and SFI.

The protein belongs to the zinc-containing alcohol dehydrogenase family. In terms of assembly, homodimer. Zn(2+) is required as a cofactor.

It carries out the reaction (E)-cinnamyl alcohol + NADP(+) = (E)-cinnamaldehyde + NADPH + H(+). The catalysed reaction is (E)-coniferol + NADP(+) = (E)-coniferaldehyde + NADPH + H(+). The enzyme catalyses (E)-sinapyl alcohol + NADP(+) = (E)-sinapaldehyde + NADPH + H(+). It catalyses the reaction (E)-4-coumaroyl alcohol + NADP(+) = (E)-4-coumaraldehyde + NADPH + H(+). It carries out the reaction (E)-caffeyl alcohol + NADP(+) = (E)-caffeyl aldehyde + NADPH + H(+). It participates in aromatic compound metabolism; phenylpropanoid biosynthesis. In terms of biological role, involved in lignin biosynthesis. May catalyze the final step specific for the production of lignin monomers, like coniferyl alcohol, sinapyl alcohol and 4-coumaryl alcohol. This is Probable cinnamyl alcohol dehydrogenase from Zea mays (Maize).